Here is a 235-residue protein sequence, read N- to C-terminus: Ion-translocating oxidoreductase complex subunit E (235 aa).

5 consecutive transmembrane segments (helical) span residues 63–83 (LGLG…ISLF), 93–113 (IPIY…LMNA), 117–137 (TLYQ…IIIG), 152–172 (IWDG…LGAL), and 206–226 (SFLL…LLAI).

This sequence belongs to the NqrDE/RnfAE family. As to quaternary structure, the complex is composed of six subunits: RnfA, RnfB, RnfC, RnfD, RnfE and RnfG.

The protein localises to the cell inner membrane. Its function is as follows. Part of a membrane-bound complex that couples electron transfer with translocation of ions across the membrane. In Haemophilus influenzae (strain ATCC 51907 / DSM 11121 / KW20 / Rd), this protein is Ion-translocating oxidoreductase complex subunit E.